Consider the following 280-residue polypeptide: DNA repair protein RecO (280 aa).

Positions 261-280 (DMAHGNHTGQEDLPATASGA) are disordered.

The protein belongs to the RecO family.

Functionally, involved in DNA repair and RecF pathway recombination. In Mycolicibacterium smegmatis (strain ATCC 700084 / mc(2)155) (Mycobacterium smegmatis), this protein is DNA repair protein RecO.